The primary structure comprises 218 residues: Adenylate kinase (218 aa).

10 to 15 serves as a coordination point for ATP; sequence GAGKGT. The tract at residues 30-59 is NMP; that stretch reads STGDMLRAAVKAGTPLGLEAKKVMDAGGLV. AMP contacts are provided by residues threonine 31, arginine 36, 57 to 59, 85 to 88, and glutamine 92; these read GLV and GFPR. The segment at 122–159 is LID; the sequence is GRRVHVASGRTYHVKFNPPKVAGKDDETGEDLIQRADD. Residues arginine 123 and 132–133 contribute to the ATP site; that span reads TY. Residues arginine 156 and arginine 167 each contribute to the AMP site. Glycine 203 contributes to the ATP binding site.

Belongs to the adenylate kinase family. As to quaternary structure, monomer.

The protein localises to the cytoplasm. The catalysed reaction is AMP + ATP = 2 ADP. It participates in purine metabolism; AMP biosynthesis via salvage pathway; AMP from ADP: step 1/1. In terms of biological role, catalyzes the reversible transfer of the terminal phosphate group between ATP and AMP. Plays an important role in cellular energy homeostasis and in adenine nucleotide metabolism. In Laribacter hongkongensis (strain HLHK9), this protein is Adenylate kinase.